The sequence spans 88 residues: Antitoxin VapB3 (88 aa).

In terms of biological role, antitoxin component of a type II toxin-antitoxin (TA) system. The polypeptide is Antitoxin VapB3 (vapB3) (Mycobacterium tuberculosis (strain CDC 1551 / Oshkosh)).